The following is a 450-amino-acid chain: Carbamoyl phosphate synthase arginine-specific small chain (450 aa).

The N-terminal 29 residues, 1 to 29 (MFAARLFKAMPARASAFPSVNASIQSRFM), are a transit peptide targeting the mitochondrion. A Glutamine amidotransferase type-1 domain is found at 220–407 (HVAVIDCGVK…LDSVRKYKAS (188 aa)). The active-site Nucleophile is the C296. Residues H380 and E382 contribute to the active site.

It belongs to the CarA family. As to quaternary structure, heterodimer composed of 2 chains; the small (or glutamine) chain promotes the hydrolysis of glutamine to ammonia, which is used by the large (or ammonia) chain to synthesize carbamoyl phosphate.

It is found in the mitochondrion matrix. The enzyme catalyses hydrogencarbonate + L-glutamine + 2 ATP + H2O = carbamoyl phosphate + L-glutamate + 2 ADP + phosphate + 2 H(+). The catalysed reaction is L-glutamine + H2O = L-glutamate + NH4(+). It functions in the pathway amino-acid biosynthesis; L-arginine biosynthesis; carbamoyl phosphate from bicarbonate: step 1/1. In terms of biological role, small subunit of the arginine-specific carbamoyl phosphate synthase (CPSase). CPSase catalyzes the formation of carbamoyl phosphate from the ammonia moiety of glutamine, carbonate, and phosphate donated by ATP, the first step of the arginine biosynthetic pathway. The small subunit (glutamine amidotransferase) binds and cleaves glutamine to supply the large subunit with the substrate ammonia. This is Carbamoyl phosphate synthase arginine-specific small chain (cpa1) from Aspergillus oryzae (strain ATCC 42149 / RIB 40) (Yellow koji mold).